The primary structure comprises 176 residues: MEMTGLNPETDRIIEVAMIITDSDLNVLAQSEVYAIHQSDDLLDNMDEWNTATHGRTGLTQRVRESSHTEAEVEQKLLDFMSEWIPGRATPMCGNSIHQDRRFMVKYMPKLENYFHYRNLDVSTLKELAKRWNPPIAKSVVKRGSHKALDDILESIEEMRHYREHFLISAPKAEAQ.

The region spanning 2-159 is the Exonuclease domain; it reads EMTGLNPETD…DDILESIEEM (158 aa). Y117 is a catalytic residue.

Belongs to the oligoribonuclease family.

It is found in the cytoplasm. In terms of biological role, 3'-to-5' exoribonuclease specific for small oligoribonucleotides. The chain is Oligoribonuclease from Neisseria gonorrhoeae (strain ATCC 700825 / FA 1090).